The primary structure comprises 147 residues: Phage-like element PBSX protein XkdM (147 aa).

This sequence to B.subtilis YqbM.

This chain is Phage-like element PBSX protein XkdM (xkdM), found in Bacillus subtilis (strain 168).